A 488-amino-acid polypeptide reads, in one-letter code: MKYRDLREFLHHLEARGELKRIRHPVDPYLEMTEVCDRTLRAGGPALLFEHPRGYDTPVLGNLFGTPHRVALGMGAEEVAALREIGELLAFLRQPEPPKGMRDAWNQLPVFRRVLDMAPKTVRKAPCQERVIEGEDVDLSRWPIQTCWPGDAGPLITWALVITRGPEKERQNLGIYRQQVIGRNRVIMRWLAHRGGALDFAEHQRHYPGEPFPVAVALGADPATILGAVTPVPDAISEYAFAGLLRGSKTELVTCKGSSLQVPASAEVVLEGHIHPGDTAEEGPFADHTGYYNETETFPVFTIDRITHRADPIYHSTYTGRPPDEPAVLGEALNEVFVPILRKQFPEIVDFYLPPEGCSYRLAVVTIRKQYPGHAKRVMLGVWSFLRQFMYTKFIIVTDGDVDARDWKAVVWALTTRSDPRRDATFIDHSPIDYLDFASPISGLGSKMGLDATNKWPGETDRTWGTPATMDEATRARVDAYWAELGLD.

Asparagine 172 provides a ligand contact to Mn(2+). Residues 175–177 (IYR), 189–191 (RWL), and 194–195 (RG) each bind prenylated FMN. Mn(2+) is bound at residue glutamate 238. Catalysis depends on aspartate 287, which acts as the Proton donor.

Belongs to the UbiD family. In terms of assembly, homohexamer. Prenylated FMN is required as a cofactor. Requires Mn(2+) as cofactor.

Its subcellular location is the cell membrane. It catalyses the reaction a 4-hydroxy-3-(all-trans-polyprenyl)benzoate + H(+) = a 2-(all-trans-polyprenyl)phenol + CO2. The protein operates within cofactor biosynthesis; ubiquinone biosynthesis. Functionally, catalyzes the decarboxylation of 3-octaprenyl-4-hydroxy benzoate to 2-octaprenylphenol, an intermediate step in ubiquinone biosynthesis. This Halorhodospira halophila (strain DSM 244 / SL1) (Ectothiorhodospira halophila (strain DSM 244 / SL1)) protein is 3-octaprenyl-4-hydroxybenzoate carboxy-lyase.